The primary structure comprises 1004 residues: Outer cell wall protein (1004 aa).

Positions 1–24 (MNKKVVLSVLSTTLVASVAASAFA) are cleaved as a signal peptide.

In terms of assembly, the outer cell wall layer is composed of subunits of the outer cell wall protein. These proteins form a hexagonal array with a lattice constant of 14.5 nm in the outer cell wall layers.

The protein resides in the secreted. It localises to the cell wall. Its subcellular location is the S-layer. Its function is as follows. The outer wall protein binds to the middle cell wall protein. This Brevibacillus brevis (strain 47 / JCM 6285 / NBRC 100599) protein is Outer cell wall protein.